We begin with the raw amino-acid sequence, 171 residues long: Terminase, small subunit (171 aa).

It belongs to the P23virus small terminase family. Homononamer; forms a ring-like structure through which genomic DNA is translocated into the capsid. Heterodimer with the terminase large subunit; the active complex is probably heterooligomeric.

Functionally, the terminase small subunit binds to the packaging initiation site and regulates the ATPase activity of the terminase large subunit. The terminase lies at a unique vertex of the procapsid and is composed of two subunits, a small terminase subunit involved in viral DNA recognition (packaging sequence), and a large terminase subunit. Both terminase subunits heterooligomerize and are docked on the portal protein to form the packaging machine. The sequence is that of Terminase, small subunit from Thermus phage G20c (Thermus thermophilus phage G20c).